Consider the following 238-residue polypeptide: Cysteine-rich venom protein pseudechetoxin-like (238 aa).

The first 19 residues, 1–19 (MIAFLVLLSLAAVLQQSSG), serve as a signal peptide directing secretion. Positions 20-28 (TVDFASESS) are excised as a propeptide. The SCP domain occupies 38–164 (VDKHNDLRRS…STKYLYVCQY (127 aa)). Intrachain disulfides connect cysteine 75–cysteine 153, cysteine 92–cysteine 165, cysteine 148–cysteine 162, cysteine 184–cysteine 191, cysteine 187–cysteine 196, cysteine 200–cysteine 233, cysteine 209–cysteine 227, and cysteine 218–cysteine 231. One can recognise a ShKT domain in the interval 200 to 233 (CKHNDDLSNCKTLVKKHKCQTEWIKSKCPATCFC).

Belongs to the CRISP family. In terms of tissue distribution, expressed by the venom gland.

The protein resides in the secreted. Blocks olfactory (CNGA2) and retinal (CNGA1) CNG channel currents. Does not affect neither depolarization- nor caffeine-induced contraction of smooth muscle. This is Cysteine-rich venom protein pseudechetoxin-like from Pseudonaja textilis (Eastern brown snake).